We begin with the raw amino-acid sequence, 429 residues long: Septin-11 (429 aa).

Residue Ala-2 is modified to N-acetylalanine. Ser-9 is subject to Phosphoserine. The Septin-type G domain occupies 38-304; it reads QGFCFNILCV…ELYRRCKLEE (267 aa). A G1 motif region spans residues 48 to 55; the sequence is GETGIGKS. GTP-binding positions include 48–55, Gly-103, 184–192, Gly-238, and Arg-253; these read GETGIGKS and KADTIAKNE. The G3 motif stretch occupies residues 100-103; sequence DTVG. Residues 183 to 186 are G4 motif; it reads AKAD. The stretch at 320-415 forms a coiled coil; that stretch reads QETYEAKRNE…QSQAQQSGAQ (96 aa). Positions 398–429 are disordered; the sequence is KKAAAQLLQSQAQQSGAQQTKKDKDKKNASFT. Residues 401–416 are compositionally biased toward low complexity; the sequence is AAQLLQSQAQQSGAQQ. Over residues 417-429 the composition is skewed to basic and acidic residues; it reads TKKDKDKKNASFT.

The protein belongs to the TRAFAC class TrmE-Era-EngA-EngB-Septin-like GTPase superfamily. Septin GTPase family. As to quaternary structure, septins polymerize into heterooligomeric protein complexes that form filaments, and can associate with cellular membranes, actin filaments and microtubules. Forms homooligomers. GTPase activity is required for filament formation. Interacts with SEPTIN7, SEPTIN9 and SEPTIN12. Widely expressed, except in leukocytes.

Its subcellular location is the cytoplasm. The protein resides in the cytoskeleton. It is found in the synapse. It localises to the cell projection. The protein localises to the dendritic spine. Its subcellular location is the axon. Filament-forming cytoskeletal GTPase. May play a role in cytokinesis (Potential). May play a role in the cytoarchitecture of neurons, including dendritic arborization and dendritic spines, and in GABAergic synaptic connectivity. During Listeria monocytogenes infection, not required for the bacterial entry process, but restricts its efficacy. This Homo sapiens (Human) protein is Septin-11.